The following is a 371-amino-acid chain: tRNA-specific 2-thiouridylase MnmA (371 aa).

Residues Gly13–Ser20 and Met39 contribute to the ATP site. The segment at Asn99–Asp101 is interaction with target base in tRNA. Catalysis depends on Cys104, which acts as the Nucleophile. A disulfide bridge links Cys104 with Cys200. Gly128 contacts ATP. Residues Lys150 to Gln152 are interaction with tRNA. The active-site Cysteine persulfide intermediate is Cys200. Residues Arg308–Tyr309 form an interaction with tRNA region.

This sequence belongs to the MnmA/TRMU family.

It localises to the cytoplasm. It catalyses the reaction S-sulfanyl-L-cysteinyl-[protein] + uridine(34) in tRNA + AH2 + ATP = 2-thiouridine(34) in tRNA + L-cysteinyl-[protein] + A + AMP + diphosphate + H(+). In terms of biological role, catalyzes the 2-thiolation of uridine at the wobble position (U34) of tRNA, leading to the formation of s(2)U34. In Bacillus thuringiensis (strain Al Hakam), this protein is tRNA-specific 2-thiouridylase MnmA.